A 271-amino-acid polypeptide reads, in one-letter code: 3-methyl-2-oxobutanoate hydroxymethyltransferase (271 aa).

Mg(2+) is bound by residues D51 and D90. 3-methyl-2-oxobutanoate contacts are provided by residues 51–52 (DS), D90, and K118. E120 provides a ligand contact to Mg(2+). Catalysis depends on E186, which acts as the Proton acceptor.

Belongs to the PanB family. As to quaternary structure, homodecamer; pentamer of dimers. Mg(2+) is required as a cofactor.

The protein localises to the cytoplasm. The catalysed reaction is 3-methyl-2-oxobutanoate + (6R)-5,10-methylene-5,6,7,8-tetrahydrofolate + H2O = 2-dehydropantoate + (6S)-5,6,7,8-tetrahydrofolate. It functions in the pathway cofactor biosynthesis; (R)-pantothenate biosynthesis; (R)-pantoate from 3-methyl-2-oxobutanoate: step 1/2. Catalyzes the reversible reaction in which hydroxymethyl group from 5,10-methylenetetrahydrofolate is transferred onto alpha-ketoisovalerate to form ketopantoate. The polypeptide is 3-methyl-2-oxobutanoate hydroxymethyltransferase (Xanthomonas oryzae pv. oryzae (strain PXO99A)).